The primary structure comprises 177 residues: Nucleoside triphosphate/diphosphate phosphatase (177 aa).

Catalysis depends on arginine 23, which acts as the Proton donor. Mg(2+)-binding residues include asparagine 87, aspartate 103, aspartate 105, aspartate 107, aspartate 120, and glutamate 123.

This sequence belongs to the Ntdp family. The cofactor is Mg(2+).

The enzyme catalyses a ribonucleoside 5'-triphosphate + H2O = a ribonucleoside 5'-diphosphate + phosphate + H(+). It carries out the reaction a ribonucleoside 5'-diphosphate + H2O = a ribonucleoside 5'-phosphate + phosphate + H(+). Its function is as follows. Has nucleoside phosphatase activity towards nucleoside triphosphates and nucleoside diphosphates. The sequence is that of Nucleoside triphosphate/diphosphate phosphatase from Streptococcus gordonii (strain Challis / ATCC 35105 / BCRC 15272 / CH1 / DL1 / V288).